Reading from the N-terminus, the 307-residue chain is MRVVFAGTPEPAVPSLRRLIESANHEVVAVVTRPDAVAGRGRKVTRSPIGLLADEHGIPVLTPVKASDPDFAAELARLEPDCAPVVAYGNLLPQNVLDIPKYGWVNLHFSLLPAWRGAAPVQAAISAGDEVTGASAFRLEAGMDTGPVYGVMTERIRDTDTAGDLLGRLAENGAALLESVLDGLEAGEINAVPQSADGVSYAPKVTVDAARVRWELPARTVDRHIRAVTPAPGAWTMIGDLRVKVGPVTVTDETLAVGEISVRKDGLYIGTATTAVRLGQIQPPGKKLMSAGDWARGARLDAEVRAQ.

Residue 110–113 (SLLP) coordinates (6S)-5,6,7,8-tetrahydrofolate.

The protein belongs to the Fmt family.

The catalysed reaction is L-methionyl-tRNA(fMet) + (6R)-10-formyltetrahydrofolate = N-formyl-L-methionyl-tRNA(fMet) + (6S)-5,6,7,8-tetrahydrofolate + H(+). Attaches a formyl group to the free amino group of methionyl-tRNA(fMet). The formyl group appears to play a dual role in the initiator identity of N-formylmethionyl-tRNA by promoting its recognition by IF2 and preventing the misappropriation of this tRNA by the elongation apparatus. The polypeptide is Methionyl-tRNA formyltransferase (Rhodococcus erythropolis (strain PR4 / NBRC 100887)).